The chain runs to 201 residues: Small ribosomal subunit protein uS4 (201 aa).

Residues Ser-91–Ala-157 enclose the S4 RNA-binding domain.

It belongs to the universal ribosomal protein uS4 family. Part of the 30S ribosomal subunit. Contacts protein S5. The interaction surface between S4 and S5 is involved in control of translational fidelity.

One of the primary rRNA binding proteins, it binds directly to 16S rRNA where it nucleates assembly of the body of the 30S subunit. Functionally, with S5 and S12 plays an important role in translational accuracy. The polypeptide is Small ribosomal subunit protein uS4 (Mycobacterium tuberculosis (strain ATCC 25177 / H37Ra)).